The chain runs to 289 residues: Acetyl-coenzyme A carboxylase carboxyl transferase subunit beta 2 (289 aa).

Positions 25 to 289 (VWTKCPSCDQ…TNTSIRLEVK (265 aa)) constitute a CoA carboxyltransferase N-terminal domain. Residues Cys-29, Cys-32, Cys-48, and Cys-51 each coordinate Zn(2+). A C4-type zinc finger spans residues 29 to 51 (CPSCDQVLYRIALKENLEVCPKC).

Belongs to the AccD/PCCB family. In terms of assembly, acetyl-CoA carboxylase is a heterohexamer composed of biotin carboxyl carrier protein (AccB), biotin carboxylase (AccC) and two subunits each of ACCase subunit alpha (AccA) and ACCase subunit beta (AccD). Zn(2+) is required as a cofactor.

The protein localises to the cytoplasm. It catalyses the reaction N(6)-carboxybiotinyl-L-lysyl-[protein] + acetyl-CoA = N(6)-biotinyl-L-lysyl-[protein] + malonyl-CoA. It functions in the pathway lipid metabolism; malonyl-CoA biosynthesis; malonyl-CoA from acetyl-CoA: step 1/1. In terms of biological role, component of the acetyl coenzyme A carboxylase (ACC) complex. Biotin carboxylase (BC) catalyzes the carboxylation of biotin on its carrier protein (BCCP) and then the CO(2) group is transferred by the transcarboxylase to acetyl-CoA to form malonyl-CoA. This is Acetyl-coenzyme A carboxylase carboxyl transferase subunit beta 2 from Vibrio parahaemolyticus serotype O3:K6 (strain RIMD 2210633).